We begin with the raw amino-acid sequence, 120 residues long: NAD(P)H-quinone oxidoreductase subunit 3, chloroplastic (120 aa).

The next 3 helical transmembrane spans lie at 9-29 (IFWA…FVSG), 64-84 (MFAL…PWAM), and 88-108 (VLGI…IVGL).

Belongs to the complex I subunit 3 family. NDH is composed of at least 16 different subunits, 5 of which are encoded in the nucleus.

The protein resides in the plastid. Its subcellular location is the chloroplast thylakoid membrane. It catalyses the reaction a plastoquinone + NADH + (n+1) H(+)(in) = a plastoquinol + NAD(+) + n H(+)(out). It carries out the reaction a plastoquinone + NADPH + (n+1) H(+)(in) = a plastoquinol + NADP(+) + n H(+)(out). In terms of biological role, NDH shuttles electrons from NAD(P)H:plastoquinone, via FMN and iron-sulfur (Fe-S) centers, to quinones in the photosynthetic chain and possibly in a chloroplast respiratory chain. The immediate electron acceptor for the enzyme in this species is believed to be plastoquinone. Couples the redox reaction to proton translocation, and thus conserves the redox energy in a proton gradient. The protein is NAD(P)H-quinone oxidoreductase subunit 3, chloroplastic of Daucus carota (Wild carrot).